A 258-amino-acid chain; its full sequence is Homeobox protein VENTX (258 aa).

Residues 1 to 32 (MRLSSSPPRGPQQLSSFGSVDWLSQSSCSGPT) are compositionally biased toward polar residues. Disordered regions lie at residues 1 to 93 (MRLS…RAPR) and 227 to 248 (SHPPTPGRPSLGPALSTGPRGL). The segment at residues 91–150 (APRVRTAFTMEQVRTLEGVFQHHQYLSPLERKRLAREMQLSEVQIKTWFQNRRMKHKRQM) is a DNA-binding region (homeobox).

In terms of tissue distribution, expressed in bone marrow of patients recovering from chemotherapy. Also expressed in an erythroleukemia cell line.

The protein localises to the nucleus. May be involved in ventralization. In Homo sapiens (Human), this protein is Homeobox protein VENTX (VENTX).